Consider the following 480-residue polypeptide: Protein nucleotidyltransferase YdiU (480 aa).

The ATP site is built by Gly87, Gly89, Arg90, Lys110, Asp122, Gly123, Arg173, and Arg180. The active-site Proton acceptor is Asp245. Mg(2+)-binding residues include Asn246 and Asp255. Position 255 (Asp255) interacts with ATP.

It belongs to the SELO family. Requires Mg(2+) as cofactor. Mn(2+) serves as cofactor.

The catalysed reaction is L-seryl-[protein] + ATP = 3-O-(5'-adenylyl)-L-seryl-[protein] + diphosphate. It catalyses the reaction L-threonyl-[protein] + ATP = 3-O-(5'-adenylyl)-L-threonyl-[protein] + diphosphate. It carries out the reaction L-tyrosyl-[protein] + ATP = O-(5'-adenylyl)-L-tyrosyl-[protein] + diphosphate. The enzyme catalyses L-histidyl-[protein] + UTP = N(tele)-(5'-uridylyl)-L-histidyl-[protein] + diphosphate. The catalysed reaction is L-seryl-[protein] + UTP = O-(5'-uridylyl)-L-seryl-[protein] + diphosphate. It catalyses the reaction L-tyrosyl-[protein] + UTP = O-(5'-uridylyl)-L-tyrosyl-[protein] + diphosphate. Its function is as follows. Nucleotidyltransferase involved in the post-translational modification of proteins. It can catalyze the addition of adenosine monophosphate (AMP) or uridine monophosphate (UMP) to a protein, resulting in modifications known as AMPylation and UMPylation. The chain is Protein nucleotidyltransferase YdiU from Jannaschia sp. (strain CCS1).